The chain runs to 510 residues: Metalloprotease TIKI homolog (510 aa).

A signal peptide spans 1 to 30 (MQVKIVQVFPCLVLLVKLVLLSVLLPSATG). Residues 31 to 489 (SYHCSNNATQ…FIPSASSGLR (459 aa)) are Extracellular-facing. Asparagine 37, asparagine 98, asparagine 108, asparagine 141, asparagine 223, asparagine 281, asparagine 322, asparagine 383, and asparagine 417 each carry an N-linked (GlcNAc...) asparagine glycan. A compositionally biased stretch (low complexity) spans 435-471 (TSLNSATASTTVATPTSSVTPPTSSSSQTRSLTISDS). A disordered region spans residues 435 to 477 (TSLNSATASTTVATPTSSVTPPTSSSSQTRSLTISDSQRTSDD). Residues 490–510 (YNIGLVCVTLFFVLLIITSAL) form a helical membrane-spanning segment.

Belongs to the TIKI family. Requires Mn(2+) as cofactor. Co(2+) serves as cofactor.

It is found in the membrane. In terms of biological role, metalloprotease. In Amphimedon queenslandica (Sponge), this protein is Metalloprotease TIKI homolog.